Consider the following 408-residue polypeptide: Argininosuccinate synthase (408 aa).

ATP is bound by residues 10-18 (AYSGGLDTS) and Ala37. L-citrulline is bound by residues Tyr90 and Ser95. Residue Gly120 coordinates ATP. Residues Thr122, Asn126, and Asp127 each coordinate L-aspartate. Asn126 contributes to the L-citrulline binding site. Residues Arg130, Ser181, Ser190, Glu266, and Tyr278 each contribute to the L-citrulline site.

The protein belongs to the argininosuccinate synthase family. Type 1 subfamily. Homotetramer.

The protein localises to the cytoplasm. It carries out the reaction L-citrulline + L-aspartate + ATP = 2-(N(omega)-L-arginino)succinate + AMP + diphosphate + H(+). The protein operates within amino-acid biosynthesis; L-arginine biosynthesis; L-arginine from L-ornithine and carbamoyl phosphate: step 2/3. In Laribacter hongkongensis (strain HLHK9), this protein is Argininosuccinate synthase.